The sequence spans 356 residues: Protein-glutamate methylesterase/protein-glutamine glutaminase 2 (356 aa).

The Response regulatory domain occupies 7-124 (KVLCVDDSAL…RDGLMEYTDT (118 aa)). 4-aspartylphosphate is present on Asp-58. Residues 157 to 349 (LLSTEKLIIL…QRVMARLATY (193 aa)) form the CheB-type methylesterase domain. Catalysis depends on residues Ser-169, His-195, and Asp-291.

The protein belongs to the CheB family. Phosphorylated by CheA. Phosphorylation of the N-terminal regulatory domain activates the methylesterase activity.

Its subcellular location is the cytoplasm. It carries out the reaction [protein]-L-glutamate 5-O-methyl ester + H2O = L-glutamyl-[protein] + methanol + H(+). It catalyses the reaction L-glutaminyl-[protein] + H2O = L-glutamyl-[protein] + NH4(+). In terms of biological role, involved in chemotaxis. Part of a chemotaxis signal transduction system that modulates chemotaxis in response to various stimuli. Catalyzes the demethylation of specific methylglutamate residues introduced into the chemoreceptors (methyl-accepting chemotaxis proteins or MCP) by CheR. Also mediates the irreversible deamidation of specific glutamine residues to glutamic acid. The polypeptide is Protein-glutamate methylesterase/protein-glutamine glutaminase 2 (Cupriavidus pinatubonensis (strain JMP 134 / LMG 1197) (Cupriavidus necator (strain JMP 134))).